The following is a 289-amino-acid chain: Shikimate kinase (289 aa).

84–94 (PVASGLSSSSA) contacts ATP.

It belongs to the GHMP kinase family. Archaeal shikimate kinase subfamily.

It localises to the cytoplasm. It catalyses the reaction shikimate + ATP = 3-phosphoshikimate + ADP + H(+). Its pathway is metabolic intermediate biosynthesis; chorismate biosynthesis; chorismate from D-erythrose 4-phosphate and phosphoenolpyruvate: step 5/7. In Methanothermobacter thermautotrophicus (strain ATCC 29096 / DSM 1053 / JCM 10044 / NBRC 100330 / Delta H) (Methanobacterium thermoautotrophicum), this protein is Shikimate kinase (aroK).